The following is a 131-amino-acid chain: Small ribosomal subunit protein uS8 (131 aa).

It belongs to the universal ribosomal protein uS8 family. Part of the 30S ribosomal subunit. Contacts proteins S5 and S12.

Functionally, one of the primary rRNA binding proteins, it binds directly to 16S rRNA central domain where it helps coordinate assembly of the platform of the 30S subunit. The chain is Small ribosomal subunit protein uS8 from Bordetella avium (strain 197N).